A 147-amino-acid chain; its full sequence is Hemoglobin subunit epsilon-4 (147 aa).

In terms of domain architecture, Globin spans 3–147 (HFTTEEKAAV…VANALAHKYH (145 aa)). Heme b-binding residues include histidine 64 and histidine 93.

This sequence belongs to the globin family. In terms of tissue distribution, red blood cells.

Hemoglobin epsilon chain is a beta-type chain found in early embryos. The chain is Hemoglobin subunit epsilon-4 (HBE4) from Bos taurus (Bovine).